The sequence spans 491 residues: Immediate early protein IE1 (491 aa).

The segment covering 1–11 has biased composition (basic and acidic residues); that stretch reads MESSAKRKMDP. The nuclear localization signal stretch occupies residues 1 to 24; it reads MESSAKRKMDPDNPDEGPSSKVPR. The tract at residues 1 to 30 is disordered; it reads MESSAKRKMDPDNPDEGPSSKVPRPETPVT. Positions 132–346 are interaction with host PML, interference with PML sumoylation and disruption of PML-associated nuclear bodies; the sequence is ILDKVHEPFE…SVMKRRIEEI (215 aa). Residues 373-445 form an interaction with host STAT2 region; the sequence is AIAEESDEEE…EEGAQEERED (73 aa). The segment at 410–420 is modulation of STAT3/STAT1 signaling; the sequence is ATIPLSSVIVA. The tract at residues 410-445 is interaction with host STAT3; it reads ATIPLSSVIVAENSDQEESEQSDEEEEEGAQEERED. The tract at residues 421–472 is acidic; that stretch reads ENSDQEESEQSDEEEEEGAQEEREDTVSVKSEPVSEIEEVAPEEEEDGAEEP. The disordered stretch occupies residues 421-491; it reads ENSDQEESEQ…PMVTRSKADQ (71 aa). The span at 423–444 shows a compositional bias: acidic residues; the sequence is SDQEESEQSDEEEEEGAQEERE. The interaction with host SUMO1 stretch occupies residues 449 to 452; that stretch reads VKSE. Lys450 participates in a covalent cross-link: Glycyl lysine isopeptide (Lys-Gly) (interchain with G-Cter in SUMO). Residues 455 to 470 show a composition bias toward acidic residues; the sequence is SEIEEVAPEEEEDGAE. The chromosome-tethering domain (CTD), binding to histones stretch occupies residues 475 to 491; that stretch reads SGGKSTHPMVTRSKADQ.

It belongs to the HHV-5 IE1 protein family. In terms of assembly, forms homodimers. Interacts with human p53/TP53; this interaction inhibits p53/TP53-dependent transactivation activity. Interacts with host STAT1. Interacts with host STAT2; this interaction promotes viral growth and counteracts the antiviral interferon response. May also interact with the host STAT1-STAT2 heterodimer. Interacts with host STAT3; this interaction leads to STAT3 nuclear accumulation and disruption of IL6-induced STAT3 phosphorylation. Interacts with host PML; this interaction inhibits host PML de novo sumoylation and probably inhibits PML regulation of type I and type II interferon-induced gene expression. Interacts with host DAXX. Interacts with host SP100. Interacts with host E2F1. Interacts with host RB1. Interacts with host HDAC1; this interaction inhibits histone deacetylation and promotes viral transcription. Interacts with host HDAC2; this interaction inhibits histone deacetylation and promotes viral transcription. Interacts with host HDAC3; this interaction inhibits histone deacetylation and promotes viral transcription. Interacts with host PLSCR1; this interaction inhibits IE1 transactivating activity. Sumoylated by host PML. Sumoylation abolishes the interaction with host STAT2 and thus the IE1-mediated repression of interferon-stimulated genes.

The protein resides in the host nucleus. Functionally, plays an important role in transactivating viral early genes as well as activating its own promoter, probably by altering the viral chromatin structure. Expression of IE1 and IE2 proteins is critical for the establishment of lytic infection and reactivation from viral latency. Disrupts PML-associated ND10 nuclear bodies by interfering with host PML and SP100 sumoylation thereby altering the regulation of type I and type II interferon-induced gene expression. Promotes efficient viral growth by interacting with and directing host SP100 to degradation, leading to enhanced acetylation level of histones. In addition, functions in counteracting the host innate antiviral response. Inhibits the type I interferon pathway by directly interacting with and sequestrating host STAT2. Also targets type II interferon pathway by repressing IL6- and STAT3 target genes. Repression of STAT3 genes is due to STAT3 nuclear accumulation and disruption of IL6-induced STAT3 phosphorylation by IE1. This repression is followed by phosphorylation and activation of STAT1. Inhibits host ISG transcription by sequestering host ISGF3 in a PML- and STAT2- binding dependent manner. Alters host cell cycle progression, probably through its interaction with host E2F1 or RB1 that overcomes the RB1-mediated repression of E2F-responsive promoters. The polypeptide is Immediate early protein IE1 (UL123) (Human cytomegalovirus (strain AD169) (HHV-5)).